Reading from the N-terminus, the 77-residue chain is Large ribosomal subunit protein bL28 (77 aa).

This sequence belongs to the bacterial ribosomal protein bL28 family.

In Albidiferax ferrireducens (strain ATCC BAA-621 / DSM 15236 / T118) (Rhodoferax ferrireducens), this protein is Large ribosomal subunit protein bL28.